The following is a 204-amino-acid chain: MNEFTLNAEQRSDLGKGASRRLRRLASLVPAVVYGGDKAPESISMLAKEVAKLLENDAAYSHIIELNVGGKKQNVIIKALQRHPAKGHVMHADFVRVIAGQKLTAIVPIHFLNEEAPVKKGGEISHTTTELEVTCLPKDLPEFIEVDLGSLEVGDNVHLSELKAPKGVEFVALAHGTDLAIANVHAPRIVKDEEEGEAEEGAAE.

Belongs to the bacterial ribosomal protein bL25 family. CTC subfamily. In terms of assembly, part of the 50S ribosomal subunit; part of the 5S rRNA/L5/L18/L25 subcomplex. Contacts the 5S rRNA. Binds to the 5S rRNA independently of L5 and L18.

In terms of biological role, this is one of the proteins that binds to the 5S RNA in the ribosome where it forms part of the central protuberance. The sequence is that of Large ribosomal subunit protein bL25 from Pseudomonas syringae pv. syringae (strain B728a).